Reading from the N-terminus, the 147-residue chain is Bis(5'-nucleosyl)-tetraphosphatase [asymmetrical] (147 aa).

Ala2 is modified (N-acetylalanine). The 138-residue stretch at 2–139 (ALRACGLIIF…EMKATLQEGH (138 aa)) folds into the Nudix hydrolase domain. The Nudix box signature appears at 43-64 (GHVDPGENDLETALRETQEETG).

This sequence belongs to the Nudix hydrolase family. Requires a divalent metal cation as cofactor.

The catalysed reaction is P(1),P(4)-bis(5'-guanosyl) tetraphosphate + H2O = GMP + GTP + 2 H(+). The enzyme catalyses a 5'-end CoA-ribonucleoside in mRNA + H2O = a 5'-end phospho-adenosine-phospho-ribonucleoside in mRNA + (R)-4'-phosphopantetheine + 2 H(+). It carries out the reaction a 5'-end FAD-phospho-ribonucleoside in mRNA + H2O = a 5'-end phospho-adenosine-phospho-ribonucleoside in mRNA + FMN + 2 H(+). Functionally, catalyzes the asymmetric hydrolysis of diadenosine 5',5'''-P1,P4-tetraphosphate (Ap4A) to yield AMP and ATP. Exhibits decapping activity towards FAD-capped RNAs and dpCoA-capped RNAs in vitro. This chain is Bis(5'-nucleosyl)-tetraphosphatase [asymmetrical] (Nudt2), found in Rattus norvegicus (Rat).